We begin with the raw amino-acid sequence, 743 residues long: Threonine synthase-like 1 (743 aa).

Position 281 is an N6-acetyllysine (K281). K351 carries the post-translational modification N6-(pyridoxal phosphate)lysine.

This sequence belongs to the threonine synthase family. Pyridoxal 5'-phosphate serves as cofactor.

The protein is Threonine synthase-like 1 (THNSL1) of Pongo abelii (Sumatran orangutan).